The primary structure comprises 188 residues: Adenine phosphoribosyltransferase (188 aa).

This sequence belongs to the purine/pyrimidine phosphoribosyltransferase family. As to quaternary structure, homodimer.

It is found in the cytoplasm. The catalysed reaction is AMP + diphosphate = 5-phospho-alpha-D-ribose 1-diphosphate + adenine. It functions in the pathway purine metabolism; AMP biosynthesis via salvage pathway; AMP from adenine: step 1/1. Catalyzes a salvage reaction resulting in the formation of AMP, that is energically less costly than de novo synthesis. This chain is Adenine phosphoribosyltransferase, found in Neisseria meningitidis serogroup C (strain 053442).